The sequence spans 233 residues: Favin (233 aa).

The Mn(2+) site is built by glutamate 120 and aspartate 122. Residues aspartate 122, phenylalanine 124, asparagine 126, and aspartate 130 each contribute to the Ca(2+) site. The Mn(2+) site is built by aspartate 130 and histidine 137. N-linked (GlcNAc...) asparagine glycosylation occurs at asparagine 168.

Belongs to the leguminous lectin family. In terms of assembly, heterodimer of an alpha and a beta chain.

This chain is Favin, found in Vicia faba (Broad bean).